Reading from the N-terminus, the 1270-residue chain is DNA-directed RNA polymerase subunit beta (1270 aa).

It belongs to the RNA polymerase beta chain family. The RNAP catalytic core consists of 2 alpha, 1 beta, 1 beta' and 1 omega subunit. When a sigma factor is associated with the core the holoenzyme is formed, which can initiate transcription.

It carries out the reaction RNA(n) + a ribonucleoside 5'-triphosphate = RNA(n+1) + diphosphate. Functionally, DNA-dependent RNA polymerase catalyzes the transcription of DNA into RNA using the four ribonucleoside triphosphates as substrates. The polypeptide is DNA-directed RNA polymerase subunit beta (Flavobacterium johnsoniae (strain ATCC 17061 / DSM 2064 / JCM 8514 / BCRC 14874 / CCUG 350202 / NBRC 14942 / NCIMB 11054 / UW101) (Cytophaga johnsonae)).